Here is a 104-residue protein sequence, read N- to C-terminus: Pterin-4-alpha-carbinolamine dehydratase (104 aa).

A2 is subject to N-acetylalanine. Residues 61–63 and 78–81 each bind substrate; these read DHH and STHE.

It belongs to the pterin-4-alpha-carbinolamine dehydratase family. Homotetramer and homodimer. Heterotetramer with HNF1A; formed by a dimer of dimers. Interacts with HNF1B (via HNF-p1 domain); the interaction increases HNF1B transactivation activity.

Its subcellular location is the cytoplasm. The protein resides in the nucleus. It catalyses the reaction (4aS,6R)-4a-hydroxy-L-erythro-5,6,7,8-tetrahydrobiopterin = (6R)-L-erythro-6,7-dihydrobiopterin + H2O. In terms of biological role, involved in tetrahydrobiopterin biosynthesis. Seems to both prevent the formation of 7-pterins and accelerate the formation of quinonoid-BH2. Coactivator for HNF1A-dependent transcription. Regulates the dimerization of homeodomain protein HNF1A and enhances its transcriptional activity. Also acts as a coactivator for HNF1B-dependent transcription. This chain is Pterin-4-alpha-carbinolamine dehydratase (Pcbd1), found in Rattus norvegicus (Rat).